We begin with the raw amino-acid sequence, 125 residues long: Snaclec B6 (125 aa).

Disulfide bonds link cysteine 2-cysteine 13, cysteine 30-cysteine 119, and cysteine 96-cysteine 111. In terms of domain architecture, C-type lectin spans 9–120; that stretch reads HEGHCYKVFK…CNISQYFVCQ (112 aa). N-linked (GlcNAc...) asparagine glycosylation occurs at asparagine 95. Asparagine 112 is a glycosylation site (N-linked (GlcNAc...) asparagine).

This sequence belongs to the snaclec family. In terms of assembly, heterodimer; disulfide-linked. Expressed by the venom gland.

It localises to the secreted. Interferes with one step of hemostasis (modulation of platelet aggregation, or coagulation cascade, for example). The sequence is that of Snaclec B6 from Macrovipera lebetinus (Levantine viper).